Reading from the N-terminus, the 114-residue chain is uncharacterized protein (114 aa).

The segment at 1 to 114 (MSTAASSRMR…HASQSPDTAY (114 aa)) is disordered. Positions 32-43 (CRRVPSRPCRPV) are enriched in low complexity.

This is an uncharacterized protein from Human adenovirus B serotype 7 (HAdV-7).